We begin with the raw amino-acid sequence, 239 residues long: tRNA (guanine-N(1)-)-methyltransferase (239 aa).

S-adenosyl-L-methionine-binding positions include glycine 108 and 127 to 132 (LGDYVL).

It belongs to the RNA methyltransferase TrmD family. In terms of assembly, homodimer.

The protein resides in the cytoplasm. It catalyses the reaction guanosine(37) in tRNA + S-adenosyl-L-methionine = N(1)-methylguanosine(37) in tRNA + S-adenosyl-L-homocysteine + H(+). In terms of biological role, specifically methylates guanosine-37 in various tRNAs. This is tRNA (guanine-N(1)-)-methyltransferase from Streptococcus pneumoniae (strain P1031).